Reading from the N-terminus, the 94-residue chain is UPF0358 protein Bcer98_2651 (94 aa).

The protein belongs to the UPF0358 family.

This Bacillus cytotoxicus (strain DSM 22905 / CIP 110041 / 391-98 / NVH 391-98) protein is UPF0358 protein Bcer98_2651.